The following is a 160-amino-acid chain: Serine-protein kinase RsbW (160 aa).

The protein belongs to the anti-sigma-factor family.

The catalysed reaction is L-seryl-[protein] + ATP = O-phospho-L-seryl-[protein] + ADP + H(+). The enzyme catalyses L-threonyl-[protein] + ATP = O-phospho-L-threonyl-[protein] + ADP + H(+). Its function is as follows. Negative regulator of sigma-B activity. Phosphorylates and inactivates its specific antagonist protein, RsbV. Upon phosphorylation of RsbV, RsbW is released and binds to sigma-B, thereby blocking its ability to form an RNA polymerase holoenzyme (E-sigma-B). This chain is Serine-protein kinase RsbW, found in Bacillus cereus (strain ZK / E33L).